The following is a 231-amino-acid chain: Ribose-5-phosphate isomerase A (231 aa).

Residues 28 to 31 (TGST), 83 to 86 (DGAD), and 96 to 99 (KGGG) each bind substrate. The active-site Proton acceptor is Glu105. Lys123 is a binding site for substrate.

This sequence belongs to the ribose 5-phosphate isomerase family. As to quaternary structure, homodimer.

It carries out the reaction aldehydo-D-ribose 5-phosphate = D-ribulose 5-phosphate. The protein operates within carbohydrate degradation; pentose phosphate pathway; D-ribose 5-phosphate from D-ribulose 5-phosphate (non-oxidative stage): step 1/1. In terms of biological role, catalyzes the reversible conversion of ribose-5-phosphate to ribulose 5-phosphate. The chain is Ribose-5-phosphate isomerase A from Rhizobium meliloti (strain 1021) (Ensifer meliloti).